The sequence spans 113 residues: Beta-defensin 112 (113 aa).

Disulfide bonds link C54/C82, C61/C75, and C65/C83.

It belongs to the beta-defensin family.

It localises to the secreted. Functionally, has antibacterial activity. The polypeptide is Beta-defensin 112 (DEFB112) (Pan troglodytes (Chimpanzee)).